We begin with the raw amino-acid sequence, 593 residues long: Aspartate--tRNA ligase (593 aa).

E173 is an L-aspartate binding site. Positions 197 to 200 (QLFK) are aspartate. R219 provides a ligand contact to L-aspartate. ATP contacts are provided by residues 219–221 (RDE) and Q228. An L-aspartate-binding site is contributed by H448. Residue E482 coordinates ATP. Residue R489 participates in L-aspartate binding. ATP is bound at residue 534-537 (GLDR).

Belongs to the class-II aminoacyl-tRNA synthetase family. Type 1 subfamily. As to quaternary structure, homodimer.

It is found in the cytoplasm. The enzyme catalyses tRNA(Asp) + L-aspartate + ATP = L-aspartyl-tRNA(Asp) + AMP + diphosphate. Its function is as follows. Catalyzes the attachment of L-aspartate to tRNA(Asp) in a two-step reaction: L-aspartate is first activated by ATP to form Asp-AMP and then transferred to the acceptor end of tRNA(Asp). In Shewanella denitrificans (strain OS217 / ATCC BAA-1090 / DSM 15013), this protein is Aspartate--tRNA ligase.